The chain runs to 509 residues: MEEIQRYLQPDRSQQHNFLYPLIFQEYIYALAHDHGLNRNRSILLENPGYNNKLSFLIVKRLITRMYQQNHFLISTNDSNKNSFLGCNKSLYSQMISEGFAFIVEIPFSLRLISSLSSFEGKKIFKSHNLQSIHSTFPFLEDNFSHLNYVLDILIPYPVHLEILVQTLRYWVKDASSLHLLRFFLHEYWNLNSLITSKKPGYSFSKKNQRFFFFLYNSYVYECESTFVFLRNQSSHLRSTSFGALLERIYFYGKIERLVEVFAKDFQVTLWLFKDPFMHYVRYQGKSILASKGTFLLMNKWKFYLVNFWQCHFSLCFHTGRIHINQLSNHSRDFMGYLSSVRLNPSMVRSQMLENSFLINNAIKKFDTLVPIIPLIGSLAKANFCTVLGHPISKPVWSDLSDSDIIDRFGRICRNLFHYYSGSSKKKTLYRIKYILRLSCARTLARKHKSTVRTFLKRSGSELLEEFLTSEEQVLSLTFPRASSSLWGVYRSRIWYLDIFCINDLANYQ.

This sequence belongs to the intron maturase 2 family. MatK subfamily.

Its subcellular location is the plastid. The protein localises to the chloroplast. Usually encoded in the trnK tRNA gene intron. Probably assists in splicing its own and other chloroplast group II introns. This chain is Maturase K, found in Nicotiana alata (Winged tobacco).